Here is a 239-residue protein sequence, read N- to C-terminus: Seed lectin beta chain (239 aa).

Residues Asp-88 and Gly-106 each coordinate D-glucose. Mn(2+)-binding residues include Glu-126 and Asp-128. The Ca(2+) site is built by Asp-128, Asn-132, and Asp-137. The Mn(2+) site is built by Asp-137 and His-142. The D-glucose site is built by Gly-217 and Ala-218.

It belongs to the leguminous lectin family. Tetramer consisting of heterodimers of alpha and beta chains.

Functionally, galactose-binding lectin. Agglutinates human erythrocytes, and requires Ca(2+) and Mn(2+) ions for full agglutinating activity. Has antifungal activity against Fusarium sp., A.niger and A.flavus. This chain is Seed lectin beta chain, found in Spatholobus parviflorus (Butea parviflora).